The chain runs to 198 residues: MAVQSTPKTLKEKLGGRNIFLIGMMGSGKSQTGPVLAKMINYAFVDTDDVIEKASKQSISSIFEKDGEKVFRDVEKKVLKEISQHHSLVIATGGGLVTLPENWGILHQGIVIWLDLDLRRSIKRLESDHKRRPLLLGDNLAENFSQIYESRKPIYLESDLRIEVEDQSPYEVATMVAEHLQSILIDQEPQAERHTTEL.

Gly26–Gln31 is a binding site for ATP. Ser30 lines the Mg(2+) pocket. 3 residues coordinate substrate: Asp48, Arg72, and Gly94. Arg132 serves as a coordination point for ATP. Arg151 contributes to the substrate binding site. Gln167 is a binding site for ATP.

It belongs to the shikimate kinase family. As to quaternary structure, monomer. Mg(2+) is required as a cofactor.

The protein resides in the cytoplasm. It carries out the reaction shikimate + ATP = 3-phosphoshikimate + ADP + H(+). The protein operates within metabolic intermediate biosynthesis; chorismate biosynthesis; chorismate from D-erythrose 4-phosphate and phosphoenolpyruvate: step 5/7. Its function is as follows. Catalyzes the specific phosphorylation of the 3-hydroxyl group of shikimic acid using ATP as a cosubstrate. The polypeptide is Shikimate kinase (Prochlorococcus marinus (strain NATL2A)).